The following is a 316-amino-acid chain: Pantothenate kinase (316 aa).

An ATP-binding site is contributed by 95 to 102 (GSVAVGKS).

This sequence belongs to the prokaryotic pantothenate kinase family.

The protein localises to the cytoplasm. It carries out the reaction (R)-pantothenate + ATP = (R)-4'-phosphopantothenate + ADP + H(+). It participates in cofactor biosynthesis; coenzyme A biosynthesis; CoA from (R)-pantothenate: step 1/5. The sequence is that of Pantothenate kinase from Shewanella baltica (strain OS195).